The following is a 65-amino-acid chain: Peptide ToAcP (65 aa).

Positions 1 to 24 (MKMKMIVVISILLIVFSLSSKAMS) are cleaved as a signal peptide. The propeptide occupies 25-34 (LEDEQESVQR). The residue at position 58 (Ala58) is an Alanine amide. Positions 59 to 65 (GRFDPAV) are excised as a propeptide.

In terms of tissue distribution, expressed by the venom gland.

It localises to the secreted. Helical wheel projections predict no hydrophobic face, suggesting a non-amphipathic peptide. Does not show antifungal activity. The protein is Peptide ToAcP of Tityus obscurus (Amazonian scorpion).